The following is a 572-amino-acid chain: Protein 5NUC (572 aa).

Residues 1–25 form the signal peptide; the sequence is MLFFLNFFVLVFSIELALLTASAAA. Aspartate 39 and histidine 41 together coordinate Zn(2+). Residues cysteine 54 and cysteine 64 are joined by a disulfide bond. Asparagine 82 carries N-linked (GlcNAc...) asparagine glycosylation. Positions 93, 125, 227, and 250 each coordinate Zn(2+). Cysteine 360 and cysteine 365 are joined by a disulfide. Substrate-binding residues include arginine 361, glutamine 399, arginine 404, and phenylalanine 427. 2 N-linked (GlcNAc...) asparagine glycosylation sites follow: asparagine 454 and asparagine 490. Cysteine 488 and cysteine 491 form a disulfide bridge. 512–518 provides a ligand contact to substrate; sequence FMKDGGD.

Belongs to the 5'-nucleotidase family. Zn(2+) is required as a cofactor.

It carries out the reaction UDP-sugar + H2O = UMP + alpha-D-aldose 1-phosphate.. It catalyses the reaction a ribonucleoside 5'-phosphate + H2O = a ribonucleoside + phosphate. In terms of biological role, degradation of external UDP-glucose to uridine monophosphate and glucose-1-phosphate, which can then be used by the cell. This Lutzomyia longipalpis (Sand fly) protein is Protein 5NUC (5NUC).